A 1139-amino-acid polypeptide reads, in one-letter code: MFQRFKSAIDRTIAEEQARQQTATQSRSPSRTGSTSSRKGDGTPGQRVKSRKQASDAGDAPNPDPAVFEAAFVIDDSDEPSRAATPLPPNAADEKKSDNTNGQGNMPEDKTPEGQGANDEGSADKAQDGATDAPATKPQAPKLQEMSPEIRQKLRKLEKLEATYPELLRSYRVAHRRATAIEPFEKALRENTPLTSISDPEALVEYLNQVNLRSDMVMQELKKVSTDKDELQKKYNEAEEKAKKLEEELVAVRSASTDQPKTSDSETSKDAQDGKNGATSPEDPEKSKSPVSSVMGMFSPKHKPQKSLGEVAETKESNEEFFSYDDEIPQLQADVASKSEEIEKLKSEVEDLQKELTTARETSTGLVESLENATRELSKTRDVASVKDSLQAQLDDRNKEITSLNQRLEEVQKQLKQLEEDKNAHTAKVDELEVSLASSDKRTSELDAELAKASNAKNISKKLIDDLNNQIETLKNEKSDSQTKITDLTKKLESKPAPAMLTPAATPMPTVLQPAATSATAASGGGKKKNNKKKKGKGGVGGAVAPSQAPTAGDPVETPEPVITTDTAGNAELKAEIVKLKEEVAEKDTQIDRLSKRRKTEEDLREEIESLQENILMIGQDHVEAKDKIKELEAEKLELKTQITDLEKKISSSTSDAEASSKMQSEMESIKTEYSDLKEKTSTLQADLGAAQQLAQNRFKDLTELREVLQKAQPELKSLRQESATLKATKEELANKTKELRDMEKREKDLKRDVERAQKISSDRETEIKSLQEKLTVETNAKLRLEDAQRVSGRDLRRSEAEKVEISGRADKAEQELQSVQEELSKLRPKVKELEEQMHKLKREKAASQEEADFKTQQYSNAQGLLSSMRDQTAEMSVQLKESKSQAESLEEELAEVQRLLQERTREGETMRRLLADVDERADNKVRDMRARMEAAVEERDRIEDESATLARRKTRETEDLKQKLKDLEREVKTLTHERDELEQREKEWRKRREELESVEEKAEAETDELRTTASQLRTALDASEKQVRDVEKQRAELRRMLEESRQRYEKLSKDLKAAQTKLVASSSRSSFDSVRSGSNGSPAGAPDTVYLKTILLQFLEQKDTKLRAQLVPVLGKLLRFDKTDEQKWQKAVQHIEVK.

Disordered regions lie at residues 1–148 (MFQR…EMSP), 225–327 (STDK…YDDE), 356–388 (LTTA…SVKD), 475–569 (KNEK…DTAG), 648–674 (KKIS…KTEY), 720–767 (RQES…RETE), 786–828 (EDAQ…SKLR), 935–961 (AAVE…TEDL), and 977–1012 (HERD…ELRT). Residues 7–18 (SAIDRTIAEEQA) are compositionally biased toward basic and acidic residues. A compositionally biased stretch (low complexity) spans 19 to 37 (RQQTATQSRSPSRTGSTSS). Coiled-coil stretches lie at residues 142–170 (KLQE…LLRS) and 215–259 (DMVM…STDQ). Composition is skewed to basic and acidic residues over residues 225–247 (STDK…KLEE), 261–273 (KTSD…DAQD), 373–385 (ATRE…DVAS), and 475–494 (KNEK…KLES). Residues 323 to 495 (SYDDEIPQLQ…TDLTKKLESK (173 aa)) adopt a coiled-coil conformation. Residues 496 to 522 (PAPAMLTPAATPMPTVLQPAATSATAA) are compositionally biased toward low complexity. A compositionally biased stretch (basic residues) spans 526 to 537 (GKKKNNKKKKGK). Positions 566–1067 (DTAGNAELKA…AAQTKLVASS (502 aa)) form a coiled coil. Low complexity predominate over residues 651-661 (SSSTSDAEASS). Basic and acidic residues-rich tracts occupy residues 728 to 767 (ATKE…RETE), 786 to 815 (EDAQ…KAEQ), 935 to 945 (AAVEERDRIED), and 977 to 1011 (HERD…DELR). Positions 1082–1132 (SPAGAPDTVYLKTILLQFLEQKDTKLRAQLVPVLGKLLRFDKTDEQKWQKA) constitute a GRIP domain.

Belongs to the ATG23 family. Forms a complex with ATG9 and ATG27.

Its subcellular location is the cytoplasm. The protein resides in the preautophagosomal structure membrane. Required for cytoplasm to vacuole transport (Cvt) vesicle formation and efficient autophagy. Plays a role in ATG protein retrieval from the pre-autophagosomal structure (PAS) and is especially required for autophagy-dependent cycling of ATG9. Autophagy is required for proper vegetative growth, asexual/sexual reproduction, and full virulence. Autophagy is particularly involved in the biosynthesis of deoxynivalenol (DON), an important virulence determinant. This chain is Autophagy-related protein 23, found in Gibberella zeae (strain ATCC MYA-4620 / CBS 123657 / FGSC 9075 / NRRL 31084 / PH-1) (Wheat head blight fungus).